A 410-amino-acid polypeptide reads, in one-letter code: MSEPAVVSILDTDLYKLTMLQAVLEHYPDAQVSYKYTNRSPKMALNQEAYNWLREQIRGLRNLHLLPEEEQWLRKNCPYLKESFYEFMHEFEFDPENSISLNYDSETKDLSIFIHGLWKNTIFYEIPLLALVSESYFKFVDKDWSPEGQFEKAYEKGKRLIRAGCAFTDFGTRRRRDPHTQEIVLQGLMKAQEDFKGPGSFLGTSNVYFAAKYNLNVSGTVAHEWYMGIAAITQNYKQANRIASLKWVQTFGTSLLIALTDTFSTDVFLKSFTANSADDLANVFHGVRQDSGCAEEYIEKVVKHYKSIGVDPSTKVIVHSDALNVDRCIELYKYCEKCGIKSAFGIGTNLTSDFQKVSNPSEVSKPMNIVIKLFSAEGTKAVKISDDIMKNTGDRDAVIQAKHQLCLPIA.

Residues Y15, F170, and T220 each coordinate nicotinate. H223 bears the Phosphohistidine mark. T348 contributes to the 5-phospho-alpha-D-ribose 1-diphosphate binding site.

This sequence belongs to the NAPRTase family. Mg(2+) serves as cofactor. Mn(2+) is required as a cofactor. Transiently phosphorylated on a His residue during the reaction cycle. Phosphorylation strongly increases the affinity for substrates and increases the rate of nicotinate D-ribonucleotide production. Dephosphorylation regenerates the low-affinity form of the enzyme, leading to product release.

The catalysed reaction is nicotinate + 5-phospho-alpha-D-ribose 1-diphosphate + ATP + H2O = nicotinate beta-D-ribonucleotide + ADP + phosphate + diphosphate. It participates in cofactor biosynthesis; NAD(+) biosynthesis; nicotinate D-ribonucleotide from nicotinate: step 1/1. In terms of biological role, catalyzes the first step in the biosynthesis of NAD from nicotinic acid, the ATP-dependent synthesis of beta-nicotinate D-ribonucleotide from nicotinate and 5-phospho-D-ribose 1-phosphate. Helps prevent cellular oxidative stress via its role in NAD biosynthesis. This Schizosaccharomyces pombe (strain 972 / ATCC 24843) (Fission yeast) protein is Probable nicotinate phosphoribosyltransferase.